The following is a 274-amino-acid chain: Tryptophan synthase alpha chain (274 aa).

Active-site proton acceptor residues include Glu49 and Asp60.

This sequence belongs to the TrpA family. As to quaternary structure, tetramer of two alpha and two beta chains.

The enzyme catalyses (1S,2R)-1-C-(indol-3-yl)glycerol 3-phosphate + L-serine = D-glyceraldehyde 3-phosphate + L-tryptophan + H2O. Its pathway is amino-acid biosynthesis; L-tryptophan biosynthesis; L-tryptophan from chorismate: step 5/5. In terms of biological role, the alpha subunit is responsible for the aldol cleavage of indoleglycerol phosphate to indole and glyceraldehyde 3-phosphate. The sequence is that of Tryptophan synthase alpha chain from Gluconacetobacter diazotrophicus (strain ATCC 49037 / DSM 5601 / CCUG 37298 / CIP 103539 / LMG 7603 / PAl5).